A 306-amino-acid chain; its full sequence is Ribokinase (306 aa).

Substrate is bound by residues 12 to 14, 40 to 44, and glutamate 141; these read NAD and GKGAN. ATP contacts are provided by residues asparagine 185 and 221–226; that span reads TLGAKG. K(+)-binding residues include aspartate 247 and threonine 249. ATP is bound at residue 252-253; the sequence is GD. Position 253 (aspartate 253) interacts with substrate. Aspartate 253 acts as the Proton acceptor in catalysis. 4 residues coordinate K(+): serine 283, lysine 286, glycine 288, and serine 292.

This sequence belongs to the carbohydrate kinase PfkB family. Ribokinase subfamily. Homodimer. Requires Mg(2+) as cofactor.

The protein resides in the cytoplasm. The catalysed reaction is D-ribose + ATP = D-ribose 5-phosphate + ADP + H(+). It functions in the pathway carbohydrate metabolism; D-ribose degradation; D-ribose 5-phosphate from beta-D-ribopyranose: step 2/2. Its activity is regulated as follows. Activated by a monovalent cation that binds near, but not in, the active site. The most likely occupant of the site in vivo is potassium. Ion binding induces a conformational change that may alter substrate affinity. Functionally, catalyzes the phosphorylation of ribose at O-5 in a reaction requiring ATP and magnesium. The resulting D-ribose-5-phosphate can then be used either for sythesis of nucleotides, histidine, and tryptophan, or as a component of the pentose phosphate pathway. This is Ribokinase from Haemophilus influenzae (strain ATCC 51907 / DSM 11121 / KW20 / Rd).